The following is a 225-amino-acid chain: Venom allergen 5 (225 aa).

The N-terminal stretch at 1-23 is a signal peptide; the sequence is MKISGFVYLILITTIINLSFSEA. Cystine bridges form between C27–C39, C31–C124, C49–C117, and C191–C208. Residues 69-210 enclose the SCP domain; that stretch reads KQHNEFRQKV…WHRHYLVCNY (142 aa).

This sequence belongs to the CRISP family. Venom allergen 5-like subfamily. As to expression, expressed by the venom gland.

The protein localises to the secreted. This is Venom allergen 5 from Vespa magnifica (Hornet).